Reading from the N-terminus, the 365-residue chain is Gibberellin 20 oxidase 1-B (365 aa).

The region spanning 199-299 (GNDSIMRLNY…RKSLAFFLCP (101 aa)) is the Fe2OG dioxygenase domain. Positions 224, 226, and 280 each coordinate Fe cation. Residue Arg290 is part of the active site.

This sequence belongs to the iron/ascorbate-dependent oxidoreductase family. GA20OX subfamily. Fe cation is required as a cofactor. It depends on L-ascorbate as a cofactor. As to expression, not detected in nodes and the ear of the elongating stem.

It carries out the reaction gibberellin A12 + 2 2-oxoglutarate + 3 O2 + H(+) = gibberellin A9 + 2 succinate + 3 CO2 + 2 H2O. The enzyme catalyses gibberellin A53 + 2 2-oxoglutarate + 3 O2 + H(+) = gibberellin A20 + 2 succinate + 3 CO2 + 2 H2O. Functionally, key oxidase enzyme in the biosynthesis of gibberellin that catalyzes the conversion of GA12 and GA53 to GA9 and GA20 respectively, via a three-step oxidation at C-20 of the GA skeleton. The sequence is that of Gibberellin 20 oxidase 1-B (GA20ox1B) from Triticum aestivum (Wheat).